The following is a 561-amino-acid chain: Oxygen-dependent choline dehydrogenase (561 aa).

6–35 lines the FAD pocket; sequence DYIIIGAGSAGNVLATRLTEDADVSVLLLE. His-475 (proton acceptor) is an active-site residue.

The protein belongs to the GMC oxidoreductase family. Requires FAD as cofactor.

The catalysed reaction is choline + A = betaine aldehyde + AH2. The enzyme catalyses betaine aldehyde + NAD(+) + H2O = glycine betaine + NADH + 2 H(+). It participates in amine and polyamine biosynthesis; betaine biosynthesis via choline pathway; betaine aldehyde from choline (cytochrome c reductase route): step 1/1. In terms of biological role, involved in the biosynthesis of the osmoprotectant glycine betaine. Catalyzes the oxidation of choline to betaine aldehyde and betaine aldehyde to glycine betaine at the same rate. This chain is Oxygen-dependent choline dehydrogenase, found in Pseudomonas aeruginosa (strain UCBPP-PA14).